The chain runs to 157 residues: Small ribosomal subunit protein uS7 (157 aa).

Belongs to the universal ribosomal protein uS7 family. As to quaternary structure, part of the 30S ribosomal subunit. Contacts proteins S9 and S11.

Its function is as follows. One of the primary rRNA binding proteins, it binds directly to 16S rRNA where it nucleates assembly of the head domain of the 30S subunit. Is located at the subunit interface close to the decoding center, probably blocks exit of the E-site tRNA. The sequence is that of Small ribosomal subunit protein uS7 from Francisella tularensis subsp. tularensis (strain FSC 198).